We begin with the raw amino-acid sequence, 143 residues long: Nucleoside diphosphate kinase (143 aa).

Lysine 11, phenylalanine 59, arginine 87, threonine 93, arginine 104, and asparagine 114 together coordinate ATP. Histidine 117 acts as the Pros-phosphohistidine intermediate in catalysis.

It belongs to the NDK family. Homotetramer. Mg(2+) serves as cofactor.

It localises to the cytoplasm. It carries out the reaction a 2'-deoxyribonucleoside 5'-diphosphate + ATP = a 2'-deoxyribonucleoside 5'-triphosphate + ADP. It catalyses the reaction a ribonucleoside 5'-diphosphate + ATP = a ribonucleoside 5'-triphosphate + ADP. Major role in the synthesis of nucleoside triphosphates other than ATP. The ATP gamma phosphate is transferred to the NDP beta phosphate via a ping-pong mechanism, using a phosphorylated active-site intermediate. The polypeptide is Nucleoside diphosphate kinase (Shewanella sediminis (strain HAW-EB3)).